A 284-amino-acid polypeptide reads, in one-letter code: UPF0276 protein PA14_21580 (284 aa).

The protein belongs to the UPF0276 family.

The protein is UPF0276 protein PA14_21580 of Pseudomonas aeruginosa (strain UCBPP-PA14).